The sequence spans 553 residues: Urocanate hydratase (553 aa).

Residues 45-46, glutamine 123, 169-171, aspartate 189, arginine 194, 235-236, 256-260, 266-267, tyrosine 315, and glycine 485 contribute to the NAD(+) site; these read GG, GMG, NA, QTSAH, and YV.

The protein belongs to the urocanase family. NAD(+) serves as cofactor.

The protein resides in the cytoplasm. It catalyses the reaction 4-imidazolone-5-propanoate = trans-urocanate + H2O. It functions in the pathway amino-acid degradation; L-histidine degradation into L-glutamate; N-formimidoyl-L-glutamate from L-histidine: step 2/3. In terms of biological role, catalyzes the conversion of urocanate to 4-imidazolone-5-propionate. The chain is Urocanate hydratase from Staphylococcus aureus (strain Mu50 / ATCC 700699).